Here is a 120-residue protein sequence, read N- to C-terminus: NAD(P)H-quinone oxidoreductase subunit 3, chloroplastic (120 aa).

A run of 3 helical transmembrane segments spans residues 11–31, 65–85, and 89–109; these read VVFF…SKLI, FALI…WAIV, and LGIT…IGLV.

The protein belongs to the complex I subunit 3 family. In terms of assembly, NDH is composed of at least 16 different subunits, 5 of which are encoded in the nucleus.

It is found in the plastid. The protein resides in the chloroplast thylakoid membrane. It carries out the reaction a plastoquinone + NADH + (n+1) H(+)(in) = a plastoquinol + NAD(+) + n H(+)(out). The catalysed reaction is a plastoquinone + NADPH + (n+1) H(+)(in) = a plastoquinol + NADP(+) + n H(+)(out). Functionally, NDH shuttles electrons from NAD(P)H:plastoquinone, via FMN and iron-sulfur (Fe-S) centers, to quinones in the photosynthetic chain and possibly in a chloroplast respiratory chain. The immediate electron acceptor for the enzyme in this species is believed to be plastoquinone. Couples the redox reaction to proton translocation, and thus conserves the redox energy in a proton gradient. In Mesostigma viride (Green alga), this protein is NAD(P)H-quinone oxidoreductase subunit 3, chloroplastic.